The primary structure comprises 332 residues: Probable allantoicase (332 aa).

Belongs to the allantoicase family.

It catalyses the reaction allantoate + H2O = (S)-ureidoglycolate + urea. The protein operates within nitrogen metabolism; (S)-allantoin degradation; (S)-ureidoglycolate from allantoate (aminidohydrolase route): step 1/1. In Pseudomonas aeruginosa (strain LESB58), this protein is Probable allantoicase.